The sequence spans 509 residues: MTLQGKPYRLSDLIKQTGVRLTDCSNQFSDRFVSGITQIAQSVERDDIFVAFQGKTRHGVEFLDQVQSCAAVLTDNKGRHIMQSDCLPTRSTPILVTDSPRSDLIVLAKRVYPIDDIRIFGITGTNGKTSTMHIAAKLLEMMGISCGISTTIGSSASESDSCLTTPELCQLYARIFTAKQARADFFALEASSHAINRGRLGDIVLEVAAFTNLTPEHMEEHKNMEAYYQAKKALFLNKRSNSAVINIDTPYGIRLFKETGCSASVISENTKYGLDHKLFWQASVRRVGLSFGFTLISPSGYRVESSISLLGKAFALNTCMAIVILCNLGIDIERIDSVLRKAGGLKMVLPGRMEVFQTGNSPRVIVDHGHTVDAVETALVAAKSITRGRLITIINADGQRDPSKRKHLGQLCGAYSDKLFITDGHSRFENPAEIRRMILDGVEGPRRQVEQIPSMTQAVLAAIDIARSDDTVLCSGFGDDPYLDVLGKKIPYSLRDEVRRGLERFAQGT.

Gly-124 to Ser-130 lines the ATP pocket. Residues Thr-164–Thr-165, Ser-191, and Arg-199 contribute to the UDP-N-acetyl-alpha-D-muramoyl-L-alanyl-D-glutamate site. An N6-carboxylysine modification is found at Lys-231.

This sequence belongs to the MurCDEF family. MurE subfamily. In terms of processing, carboxylation is probably crucial for Mg(2+) binding and, consequently, for the gamma-phosphate positioning of ATP.

It localises to the cytoplasm. Its pathway is cell wall biogenesis; peptidoglycan biosynthesis. Catalyzes the addition of an amino acid to the nucleotide precursor UDP-N-acetylmuramoyl-L-alanyl-D-glutamate (UMAG) in the biosynthesis of bacterial cell-wall peptidoglycan. In Tropheryma whipplei (strain Twist) (Whipple's bacillus), this protein is UDP-N-acetylmuramyl-tripeptide synthetase.